The primary structure comprises 527 residues: Laccase-5 (527 aa).

An N-terminal signal peptide occupies residues Met-1–Gly-23. The region spanning Ile-25 to Tyr-150 is the Plastocyanin-like 1 domain. Residues Asn-74 and Asn-77 are each glycosylated (N-linked (GlcNAc...) asparagine). Residues His-87, His-89, His-132, and His-134 each coordinate Cu cation. 2 disulfide bridges follow: Cys-108–Cys-516 and Cys-140–Cys-230. Residues Asn-156, Asn-209, Asn-233, Asn-242, Asn-276, Asn-317, Asn-358, Asn-366, Asn-393, and Asn-402 are each glycosylated (N-linked (GlcNAc...) asparagine). The Plastocyanin-like 2 domain maps to Val-162–Tyr-306. A Plastocyanin-like 3 domain is found at Thr-373–Asp-498. Cu cation is bound by residues His-425, His-428, His-430, His-480, Cys-481, His-482, and His-486.

The protein belongs to the multicopper oxidase family. Homodimer. Requires Cu cation as cofactor.

The protein localises to the secreted. It catalyses the reaction 4 hydroquinone + O2 = 4 benzosemiquinone + 2 H2O. In terms of biological role, lignin degradation and detoxification of lignin-derived products. This is Laccase-5 (LCC5) from Trametes villosa (White-rot fungus).